The following is a 143-amino-acid chain: Large ribosomal subunit protein uL11 (143 aa).

The protein belongs to the universal ribosomal protein uL11 family. In terms of assembly, part of the ribosomal stalk of the 50S ribosomal subunit. Interacts with L10 and the large rRNA to form the base of the stalk. L10 forms an elongated spine to which L12 dimers bind in a sequential fashion forming a multimeric L10(L12)X complex. In terms of processing, one or more lysine residues are methylated.

Its function is as follows. Forms part of the ribosomal stalk which helps the ribosome interact with GTP-bound translation factors. The sequence is that of Large ribosomal subunit protein uL11 from Novosphingobium aromaticivorans (strain ATCC 700278 / DSM 12444 / CCUG 56034 / CIP 105152 / NBRC 16084 / F199).